Consider the following 621-residue polypeptide: Beta-conglycinin alpha' subunit (621 aa).

The N-terminal stretch at 1–24 is a signal peptide; the sequence is MMRARFPLLLLGVVFLASVSVSFG. A propeptide spanning residues 25–62 is cleaved from the precursor; sequence IAYWEKQNPSHNKCLRSCNSEKDSYRNQACHARCNLLK. Positions 64–214 are disordered; it reads EEEEECEEGQ…RHKNKNPFHF (151 aa). Composition is skewed to basic and acidic residues over residues 80–92 and 111–173; these read QHPE…HGEK and PHQE…QGKE. A compositionally biased stretch (acidic residues) spans 174-196; sequence SEEEEEDQDEDEEQDKESQESEG. Cupin type-1 domains follow at residues 212 to 370 and 422 to 583; these read FHFN…EEIN and FNLR…KDIE. N-linked (GlcNAc...) asparagine glycans are attached at residues Asn277 and Asn533. A necessary for sorting to protein storage vacuole region spans residues 612–621; that stretch reads PLSSILRAFY.

It belongs to the 7S seed storage protein family. In terms of assembly, the alpha-, alpha'-, and beta-subunits associate in various combinations to form trimeric proteins.

The protein localises to the vacuole. Its subcellular location is the aleurone grain. The protein resides in the endoplasmic reticulum. It is found in the protein storage vacuole. In terms of biological role, seed storage protein. Accumulates during seed development and is hydrolyzed after germination to provide a carbon and nitrogen source for the developing seedling. The protein is Beta-conglycinin alpha' subunit of Glycine max (Soybean).